A 174-amino-acid polypeptide reads, in one-letter code: Early E1A protein (174 aa).

An interaction with RB1 in competition with E2F1 region spans residues 40–48 (PSLHDLFDL). The LXCXE motif, interaction with host RB1 signature appears at 106-110 (LLCLE). A zinc finger lies at 145 to 163 (CLRCAYYQEQGENSICGLC).

The protein belongs to the adenoviridae E1A protein family. In terms of assembly, interacts with host UBE2I; this interaction interferes with polySUMOylation. Interacts with host RB1; this interaction induces the aberrant dissociation of RB1-E2F1 complex thereby disrupting the activity of RB1 and activating E2F1-regulated genes. Interacts with host ATF7; the interaction enhances ATF7-mediated viral transactivation activity which requires the zinc binding domains of both proteins. Isoform early E1A 32 kDa protein and isoform early E1A 26 kDa protein interact (via N-terminus) with CUL1 and E3 ubiquitin ligase RBX1; these interactions inhibit RBX1-CUL1-dependent elongation reaction of ubiquitin chains and attenuate ubiquitination of SCF(FBXW7) target proteins. Interacts (via PXLXP motif) with host ZMYND11/BS69 (via MYND-type zinc finger); this interaction inhibits E1A mediated transactivation. Interacts with host EP300; this interaction stimulates the acetylation of RB1 by recruiting EP300 and RB1 into a multimeric-protein complex. Interacts with host CTBP1 and CTBP2; this interaction seems to potentiate viral replication. Interacts with host DCAF7. Interacts with host DYRK1A. Interacts with host KPNA4; this interaction allows E1A import into the host nucleus. Interacts with host EP400; this interaction stabilizes MYC. Interacts with host TBP protein; this interaction probably disrupts the TBP-TATA complex.

Its subcellular location is the host nucleus. Plays a role in viral genome replication by driving entry of quiescent cells into the cell cycle. Stimulation of progression from G1 to S phase allows the virus to efficiently use the cellular DNA replicating machinery to achieve viral genome replication. E1A protein has both transforming and trans-activating activities. Induces the disassembly of the E2F1 transcription factor from RB1 by direct competition for the same binding site on RB1, with subsequent transcriptional activation of E2F1-regulated S-phase genes and of the E2 region of the adenoviral genome. Release of E2F1 leads to the ARF-mediated inhibition of MDM2 and causes TP53/p53 to accumulate because it is not targeted for degradation by MDM2-mediated ubiquitination anymore. This increase in TP53, in turn, would arrest the cell proliferation and direct its death but this effect is counteracted by the viral protein E1B-55K. Inactivation of the ability of RB1 to arrest the cell cycle is critical for cellular transformation, uncontrolled cellular growth and proliferation induced by viral infection. Interaction with RBX1 and CUL1 inhibits ubiquitination of the proteins targeted by SCF(FBXW7) ubiquitin ligase complex, and may be linked to unregulated host cell proliferation. The tumorigenesis-restraining activity of E1A may be related to the disruption of the host CtBP-CtIP complex through the CtBP binding motif. The polypeptide is Early E1A protein (Canine adenovirus serotype 1 (strain RI261) (CAdV-1)).